The chain runs to 231 residues: Large ribosomal subunit protein uL1 (231 aa).

Belongs to the universal ribosomal protein uL1 family. In terms of assembly, part of the 50S ribosomal subunit.

Functionally, binds directly to 23S rRNA. The L1 stalk is quite mobile in the ribosome, and is involved in E site tRNA release. Protein L1 is also a translational repressor protein, it controls the translation of the L11 operon by binding to its mRNA. The protein is Large ribosomal subunit protein uL1 of Verminephrobacter eiseniae (strain EF01-2).